A 299-amino-acid polypeptide reads, in one-letter code: Inosose dehydratase (299 aa).

Belongs to the IolE/MocC family. It depends on glutathione as a cofactor. Co(2+) serves as cofactor. The cofactor is Mn(2+).

The enzyme catalyses scyllo-inosose = 3D-3,5/4-trihydroxycyclohexane-1,2-dione + H2O. Functionally, catalyzes the dehydration of inosose (2-keto-myo-inositol, 2KMI or 2,4,6/3,5-pentahydroxycyclohexanone) to 3D-(3,5/4)-trihydroxycyclohexane-1,2-dione (D-2,3-diketo-4-deoxy-epi-inositol). This chain is Inosose dehydratase, found in Klebsiella pneumoniae (strain 342).